The following is a 91-amino-acid chain: Small ribosomal subunit protein uS19 (91 aa).

This sequence belongs to the universal ribosomal protein uS19 family.

Protein S19 forms a complex with S13 that binds strongly to the 16S ribosomal RNA. The polypeptide is Small ribosomal subunit protein uS19 (Prochlorococcus marinus (strain SARG / CCMP1375 / SS120)).